The following is a 264-amino-acid chain: Tryptophan synthase alpha chain (264 aa).

Residues E45 and D56 each act as proton acceptor in the active site.

Belongs to the TrpA family. As to quaternary structure, tetramer of two alpha and two beta chains.

It catalyses the reaction (1S,2R)-1-C-(indol-3-yl)glycerol 3-phosphate + L-serine = D-glyceraldehyde 3-phosphate + L-tryptophan + H2O. It functions in the pathway amino-acid biosynthesis; L-tryptophan biosynthesis; L-tryptophan from chorismate: step 5/5. In terms of biological role, the alpha subunit is responsible for the aldol cleavage of indoleglycerol phosphate to indole and glyceraldehyde 3-phosphate. This Leptospira borgpetersenii serovar Hardjo-bovis (strain JB197) protein is Tryptophan synthase alpha chain.